A 337-amino-acid polypeptide reads, in one-letter code: Cytoskeleton protein RodZ (337 aa).

The Cytoplasmic portion of the chain corresponds to 1–111; that stretch reads MNTEATHDQN…LGKRRKKRDG (111 aa). In terms of domain architecture, HTH cro/C1-type spans 19–71; that stretch reads LRNAREQLGLSQQAVAERLCLKVSTVRDIEEDKAPADLASTFLRGYIRSYARL. Positions 30–49 form a DNA-binding region, H-T-H motif; that stretch reads QQAVAERLCLKVSTVRDIEE. A helical; Signal-anchor for type II membrane protein transmembrane segment spans residues 112–132; the sequence is WLMTFTWLVLFVVIGLSGAWW. Residues 133 to 337 are Periplasmic-facing; that stretch reads WQDHKAQQEE…TLNAEQSPAQ (205 aa). Residues 145–167 are compositionally biased toward polar residues; sequence TMADQSSAELSSNSEQGQSVPLN. Residues 145-220 form a disordered region; the sequence is TMADQSSAEL…VSPSQANVDT (76 aa). Low complexity predominate over residues 168 to 207; that stretch reads TSTTTDPATTSTPPASVDTTATNTQTPAVTAPAPAVDPQQ. The span at 208-218 shows a compositional bias: polar residues; the sequence is NAVVSPSQANV.

This sequence belongs to the RodZ family.

Its subcellular location is the cell inner membrane. Functionally, cytoskeletal protein that is involved in cell-shape control through regulation of the length of the long axis. In Escherichia coli O17:K52:H18 (strain UMN026 / ExPEC), this protein is Cytoskeleton protein RodZ.